A 408-amino-acid chain; its full sequence is Peptidase T (408 aa).

Position 78 (His-78) interacts with Zn(2+). Asp-80 is a catalytic residue. Asp-140 is a Zn(2+) binding site. Residue Glu-174 is the Proton acceptor of the active site. 3 residues coordinate Zn(2+): Glu-175, Asp-197, and His-379.

It belongs to the peptidase M20B family. The cofactor is Zn(2+).

The protein resides in the cytoplasm. The catalysed reaction is Release of the N-terminal residue from a tripeptide.. Functionally, cleaves the N-terminal amino acid of tripeptides. This Staphylococcus aureus (strain bovine RF122 / ET3-1) protein is Peptidase T.